Reading from the N-terminus, the 454-residue chain is Arginine biosynthesis bifunctional protein ArgJ, mitochondrial (454 aa).

Residues threonine 184, lysine 213, threonine 224, glutamate 311, asparagine 449, and threonine 454 each contribute to the substrate site. Residue threonine 224 is the Nucleophile of the active site.

It belongs to the ArgJ family. As to quaternary structure, heterodimer of an alpha and a beta chain. In terms of processing, the alpha and beta chains are autoproteolytically processed from a single precursor protein within the mitochondrion.

It is found in the mitochondrion matrix. The enzyme catalyses N(2)-acetyl-L-ornithine + L-glutamate = N-acetyl-L-glutamate + L-ornithine. It carries out the reaction L-glutamate + acetyl-CoA = N-acetyl-L-glutamate + CoA + H(+). Its pathway is amino-acid biosynthesis; L-arginine biosynthesis; L-ornithine and N-acetyl-L-glutamate from L-glutamate and N(2)-acetyl-L-ornithine (cyclic): step 1/1. It participates in amino-acid biosynthesis; L-arginine biosynthesis; N(2)-acetyl-L-ornithine from L-glutamate: step 1/4. In terms of biological role, catalyzes two activities which are involved in the cyclic version of arginine biosynthesis: the synthesis of acetylglutamate from glutamate and acetyl-CoA, and of ornithine by transacetylation between acetylornithine and glutamate. This is Arginine biosynthesis bifunctional protein ArgJ, mitochondrial from Aspergillus clavatus (strain ATCC 1007 / CBS 513.65 / DSM 816 / NCTC 3887 / NRRL 1 / QM 1276 / 107).